The sequence spans 297 residues: Acetyl-coenzyme A carboxylase carboxyl transferase subunit beta (297 aa).

Residues 27–296 (LWHKCPSCEA…PVETSQVTAK (270 aa)) enclose the CoA carboxyltransferase N-terminal domain. Residues C31, C34, C50, and C53 each coordinate Zn(2+). The segment at 31–53 (CPSCEAVLYRPELEKTLDVCPKC) adopts a C4-type zinc-finger fold.

The protein belongs to the AccD/PCCB family. In terms of assembly, acetyl-CoA carboxylase is a heterohexamer composed of biotin carboxyl carrier protein (AccB), biotin carboxylase (AccC) and two subunits each of ACCase subunit alpha (AccA) and ACCase subunit beta (AccD). Zn(2+) serves as cofactor.

Its subcellular location is the cytoplasm. The catalysed reaction is N(6)-carboxybiotinyl-L-lysyl-[protein] + acetyl-CoA = N(6)-biotinyl-L-lysyl-[protein] + malonyl-CoA. The protein operates within lipid metabolism; malonyl-CoA biosynthesis; malonyl-CoA from acetyl-CoA: step 1/1. Component of the acetyl coenzyme A carboxylase (ACC) complex. Biotin carboxylase (BC) catalyzes the carboxylation of biotin on its carrier protein (BCCP) and then the CO(2) group is transferred by the transcarboxylase to acetyl-CoA to form malonyl-CoA. This Stutzerimonas stutzeri (strain A1501) (Pseudomonas stutzeri) protein is Acetyl-coenzyme A carboxylase carboxyl transferase subunit beta.